The chain runs to 307 residues: Porphobilinogen deaminase (307 aa).

Residue Cys-241 is modified to S-(dipyrrolylmethanemethyl)cysteine.

This sequence belongs to the HMBS family. Monomer. The cofactor is dipyrromethane.

The enzyme catalyses 4 porphobilinogen + H2O = hydroxymethylbilane + 4 NH4(+). The protein operates within porphyrin-containing compound metabolism; protoporphyrin-IX biosynthesis; coproporphyrinogen-III from 5-aminolevulinate: step 2/4. Its function is as follows. Tetrapolymerization of the monopyrrole PBG into the hydroxymethylbilane pre-uroporphyrinogen in several discrete steps. The protein is Porphobilinogen deaminase of Coxiella burnetii (strain RSA 331 / Henzerling II).